The primary structure comprises 285 residues: Undecaprenyl-diphosphatase (285 aa).

The next 7 membrane-spanning stretches (helical) occupy residues 40–60, 89–109, 137–157, 171–191, 209–229, 241–261, and 265–285; these read GPLI…VYFF, LFWW…AIKL, DLIA…DWLG, GLIV…RSGV, FSFL…VPEI, LIAG…LMNF, and ASML…LAFF.

Belongs to the UppP family.

It is found in the cell inner membrane. It catalyses the reaction di-trans,octa-cis-undecaprenyl diphosphate + H2O = di-trans,octa-cis-undecaprenyl phosphate + phosphate + H(+). Functionally, catalyzes the dephosphorylation of undecaprenyl diphosphate (UPP). Confers resistance to bacitracin. In Erythrobacter litoralis (strain HTCC2594), this protein is Undecaprenyl-diphosphatase.